The sequence spans 149 residues: Calmodulin-like protein 3 (149 aa).

4 consecutive EF-hand domains span residues 8–43 (EQIA…LGQN), 44–79 (PTEA…KMKD), 81–116 (DSEE…LGEK), and 117–149 (LSDE…LVSK). 19 residues coordinate Ca(2+): Asp21, Asp23, Asp25, Cys27, Glu32, Asp57, Asp59, Asn61, Thr63, Glu68, Asp94, Asp96, Asn98, Glu105, Asp130, Asp132, Asp134, Gln136, and Glu141.

Belongs to the calmodulin family. As to quaternary structure, interacts with MYO10, the interaction is calcium-dependent and essential for MYO10 function in filopodial extension.

Functionally, may function as a specific light chain of unconventional myosin-10 (MYO10), also enhances MYO10 translation, possibly by acting as a chaperone for the emerging MYO10 heavy chain protein. May compete with calmodulin by binding, with different affinities, to cellular substrates. In Rattus norvegicus (Rat), this protein is Calmodulin-like protein 3 (Calml3).